The chain runs to 58 residues: Potassium channel toxin alpha-KTx 16.6 (58 aa).

Positions 1 to 22 are cleaved as a signal peptide; sequence MKILSVLLIALIICSINICSEA. Intrachain disulfides connect Cys29-Cys50, Cys35-Cys55, and Cys39-Cys57.

This sequence belongs to the short scorpion toxin superfamily. Potassium channel inhibitor family. Alpha-KTx 16 subfamily. In terms of tissue distribution, expressed by the venom gland.

The protein localises to the secreted. Functionally, inhibits potassium channel. The chain is Potassium channel toxin alpha-KTx 16.6 from Buthus israelis (Israeli scorpion).